The primary structure comprises 127 residues: Small ribosomal subunit protein uS11c (127 aa).

The protein belongs to the universal ribosomal protein uS11 family. In terms of assembly, part of the 30S ribosomal subunit.

It is found in the plastid. The protein resides in the chloroplast. The chain is Small ribosomal subunit protein uS11c from Heterosigma akashiwo (strain NIES-293 / 8280G21-1).